The sequence spans 203 residues: Holliday junction branch migration complex subunit RuvA (203 aa).

The domain I stretch occupies residues 1-61; the sequence is MIIYKYGKIM…EYTKVTYGFD (61 aa). Positions 62–139 are domain II; sequence NFKELVIFED…KFMKKLTSDE (78 aa). The segment at 140–147 is flexible linker; that stretch reads AAKIKVPA. Residues 147-203 form a domain III region; sequence ASSENENKFLDTMKMLGFKQQQIKFALDKIELNDDIETCVENAIKLISQQQHETSRV.

It belongs to the RuvA family. In terms of assembly, homotetramer. Forms an RuvA(8)-RuvB(12)-Holliday junction (HJ) complex. HJ DNA is sandwiched between 2 RuvA tetramers; dsDNA enters through RuvA and exits via RuvB. An RuvB hexamer assembles on each DNA strand where it exits the tetramer. Each RuvB hexamer is contacted by two RuvA subunits (via domain III) on 2 adjacent RuvB subunits; this complex drives branch migration. In the full resolvosome a probable DNA-RuvA(4)-RuvB(12)-RuvC(2) complex forms which resolves the HJ.

It localises to the cytoplasm. The RuvA-RuvB-RuvC complex processes Holliday junction (HJ) DNA during genetic recombination and DNA repair, while the RuvA-RuvB complex plays an important role in the rescue of blocked DNA replication forks via replication fork reversal (RFR). RuvA specifically binds to HJ cruciform DNA, conferring on it an open structure. The RuvB hexamer acts as an ATP-dependent pump, pulling dsDNA into and through the RuvAB complex. HJ branch migration allows RuvC to scan DNA until it finds its consensus sequence, where it cleaves and resolves the cruciform DNA. This chain is Holliday junction branch migration complex subunit RuvA, found in Metamycoplasma arthritidis (strain 158L3-1) (Mycoplasma arthritidis).